The primary structure comprises 307 residues: MVEQSKVPSSSLCPPDKIIFDEERGEYICTETGEVIEERIIDQGPEWRAFTPEEKEKRSRVGGPLNQTIHDMGISTVIDWKDKDAMGRSLDPKRRLEVLRWRKWQIRTRIQSSIDRNLAQAMNELERIGNLLNLPKAVKDEAALIYRKAVEKGLVRGRSIESVVAASIYAACRRMKMARTLDEIAQFTKANRKEVARCYRLILRELDIEVPVSDPKDYVTRIGTLLSLSGITMKHAAEIIEKAKNSGLTAGKDPAGLAAAAIYIAALLNDERRTQKEIAQVAGVTEVTVRNRYKELTQELKIQIPSQ.

2 repeat units span residues Asn-123 to Leu-206 and Asp-217 to Gln-298.

This sequence belongs to the TFIIB family.

Its function is as follows. Stabilizes TBP binding to an archaeal box-A promoter. Also responsible for recruiting RNA polymerase II to the pre-initiation complex (DNA-TBP-TFIIB). The chain is Transcription initiation factor IIB from Sulfolobus acidocaldarius (strain ATCC 33909 / DSM 639 / JCM 8929 / NBRC 15157 / NCIMB 11770).